The following is a 392-amino-acid chain: Formate-dependent phosphoribosylglycinamide formyltransferase (392 aa).

N(1)-(5-phospho-beta-D-ribosyl)glycinamide is bound by residues 22-23 (EL) and Glu82. Residues Arg114, Lys155, 160 to 165 (SSGKGQ), 195 to 198 (EGVV), and Glu203 each bind ATP. The region spanning 119–308 (RLAAEELGLP…EFALHVRAFL (190 aa)) is the ATP-grasp domain. Positions 267 and 279 each coordinate Mg(2+). N(1)-(5-phospho-beta-D-ribosyl)glycinamide-binding positions include Asp286, Lys355, and 362–363 (RR).

Belongs to the PurK/PurT family. In terms of assembly, homodimer.

The catalysed reaction is N(1)-(5-phospho-beta-D-ribosyl)glycinamide + formate + ATP = N(2)-formyl-N(1)-(5-phospho-beta-D-ribosyl)glycinamide + ADP + phosphate + H(+). It participates in purine metabolism; IMP biosynthesis via de novo pathway; N(2)-formyl-N(1)-(5-phospho-D-ribosyl)glycinamide from N(1)-(5-phospho-D-ribosyl)glycinamide (formate route): step 1/1. In terms of biological role, involved in the de novo purine biosynthesis. Catalyzes the transfer of formate to 5-phospho-ribosyl-glycinamide (GAR), producing 5-phospho-ribosyl-N-formylglycinamide (FGAR). Formate is provided by PurU via hydrolysis of 10-formyl-tetrahydrofolate. This Salmonella paratyphi B (strain ATCC BAA-1250 / SPB7) protein is Formate-dependent phosphoribosylglycinamide formyltransferase.